We begin with the raw amino-acid sequence, 420 residues long: Histidine--tRNA ligase (420 aa).

This sequence belongs to the class-II aminoacyl-tRNA synthetase family. Homodimer.

It localises to the cytoplasm. It catalyses the reaction tRNA(His) + L-histidine + ATP = L-histidyl-tRNA(His) + AMP + diphosphate + H(+). The sequence is that of Histidine--tRNA ligase from Thermotoga petrophila (strain ATCC BAA-488 / DSM 13995 / JCM 10881 / RKU-1).